A 355-amino-acid polypeptide reads, in one-letter code: Heme A synthase (355 aa).

8 helical membrane-spanning segments follow: residues 21–41 (LARW…VGGI), 85–102 (INLG…FWEW), 136–156 (LFAL…MVAS), 173–193 (LLTA…LGAL), 208–228 (AIGV…VAGL), 264–284 (FLIH…LLLL), 299–319 (ALVI…VSGV), and 322–342 (WVAV…AAAL). Position 270 (histidine 270) interacts with heme. Histidine 327 provides a ligand contact to heme.

Belongs to the COX15/CtaA family. Type 2 subfamily. As to quaternary structure, interacts with CtaB. Heme b is required as a cofactor.

The protein resides in the cell membrane. The catalysed reaction is Fe(II)-heme o + 2 A + H2O = Fe(II)-heme a + 2 AH2. The protein operates within porphyrin-containing compound metabolism; heme A biosynthesis; heme A from heme O: step 1/1. Catalyzes the conversion of heme O to heme A by two successive hydroxylations of the methyl group at C8. The first hydroxylation forms heme I, the second hydroxylation results in an unstable dihydroxymethyl group, which spontaneously dehydrates, resulting in the formyl group of heme A. The chain is Heme A synthase from Sphingopyxis alaskensis (strain DSM 13593 / LMG 18877 / RB2256) (Sphingomonas alaskensis).